Reading from the N-terminus, the 117-residue chain is Immunoglobulin heavy variable 4-38-2 (117 aa).

The signal sequence occupies residues 1-19; sequence MKHLWFFLLLVAAPRWVLS. Residues 20–44 are framework-1; that stretch reads QVQLQESGPGLVKPSETLSLTCTVS. The Ig-like domain maps to 20–117; the sequence is QVQLQESGPG…ADTAVYYCAR (98 aa). A disulfide bridge connects residues Cys41 and Cys115. The tract at residues 45-53 is complementarity-determining-1; that stretch reads GYSISSGYY. The framework-2 stretch occupies residues 54–70; it reads WGWIRQPPGKGLEWIGS. The tract at residues 71-77 is complementarity-determining-2; the sequence is IYHSGST. The interval 78–115 is framework-3; sequence YYNPSLKSRVTISVDTSKNQFSLKLSSVTAADTAVYYC. The complementarity-determining-3 stretch occupies residues 116–117; sequence AR.

As to quaternary structure, immunoglobulins are composed of two identical heavy chains and two identical light chains; disulfide-linked.

The protein resides in the secreted. The protein localises to the cell membrane. Its function is as follows. V region of the variable domain of immunoglobulin heavy chains that participates in the antigen recognition. Immunoglobulins, also known as antibodies, are membrane-bound or secreted glycoproteins produced by B lymphocytes. In the recognition phase of humoral immunity, the membrane-bound immunoglobulins serve as receptors which, upon binding of a specific antigen, trigger the clonal expansion and differentiation of B lymphocytes into immunoglobulins-secreting plasma cells. Secreted immunoglobulins mediate the effector phase of humoral immunity, which results in the elimination of bound antigens. The antigen binding site is formed by the variable domain of one heavy chain, together with that of its associated light chain. Thus, each immunoglobulin has two antigen binding sites with remarkable affinity for a particular antigen. The variable domains are assembled by a process called V-(D)-J rearrangement and can then be subjected to somatic hypermutations which, after exposure to antigen and selection, allow affinity maturation for a particular antigen. This Homo sapiens (Human) protein is Immunoglobulin heavy variable 4-38-2.